The sequence spans 442 residues: Putative protein YjbI (442 aa).

This is Putative protein YjbI (yjbI) from Escherichia coli (strain K12).